A 455-amino-acid polypeptide reads, in one-letter code: Putative FBD-associated F-box protein At5g56400 (455 aa).

The F-box domain occupies 32–81 (VDKISDLPEDLLVHILSLLPTTNDIVATSGVSKRWESLWTKVHKLRFNDR). The FBD domain occupies 372–421 (WNQQPSYVPECLTKSLEIFEWRNYKATFRERDVAVYILKNSTCLKKTVIS).

In Arabidopsis thaliana (Mouse-ear cress), this protein is Putative FBD-associated F-box protein At5g56400.